The primary structure comprises 478 residues: MTLSFVTRWRDELPETYTALSPTPLNNARLIWHNTELANTLSIPSSLFKNGAGVWGGEALLPGMSPLAQVYSGHQFGVWAGQLGDGRGILLGEQLLADGTTMDWHLKGAGLTPYSRMGDGRAVLRSTIRESLASEAMHYLGIPTTRALSIVTSDSPVYRETAEPGAMLMRVAPSHLRFGHFEHFYYRRESEKVRQLADFAIRHYWSHLADDEDKYRLWFSDVVARTASLIAQWQTVGFAHGVMNTDNMSLLGLTLDYGPFGFLDDYEPGFICNHSDHQGRYSFDNQPAVALWNLQRLAQTLSPFVAVDALNEALDSYQQVLLTHYGERMRQKLGFMTEQKEDNALLNELFSLMARERSDYTRTFRMLSLTEQHSAASPLRDEFIDRAAFDDWFARYRGRLQQDEVSDSERQQLMQSVNPALVLRNWLAQRAIEAAEKGDMTELHRLHEALRNPFSDRDDDYVSRPPDWGKRLEVSCSS.

Positions 84, 86, 87, 107, 119, 120, 170, and 177 each coordinate ATP. The active-site Proton acceptor is Asp246. Asn247 and Asp256 together coordinate Mg(2+). Residue Asp256 participates in ATP binding.

Belongs to the SELO family. Requires Mg(2+) as cofactor. The cofactor is Mn(2+).

It catalyses the reaction L-seryl-[protein] + ATP = 3-O-(5'-adenylyl)-L-seryl-[protein] + diphosphate. The enzyme catalyses L-threonyl-[protein] + ATP = 3-O-(5'-adenylyl)-L-threonyl-[protein] + diphosphate. The catalysed reaction is L-tyrosyl-[protein] + ATP = O-(5'-adenylyl)-L-tyrosyl-[protein] + diphosphate. It carries out the reaction L-histidyl-[protein] + UTP = N(tele)-(5'-uridylyl)-L-histidyl-[protein] + diphosphate. It catalyses the reaction L-seryl-[protein] + UTP = O-(5'-uridylyl)-L-seryl-[protein] + diphosphate. The enzyme catalyses L-tyrosyl-[protein] + UTP = O-(5'-uridylyl)-L-tyrosyl-[protein] + diphosphate. Its function is as follows. Nucleotidyltransferase involved in the post-translational modification of proteins. It can catalyze the addition of adenosine monophosphate (AMP) or uridine monophosphate (UMP) to a protein, resulting in modifications known as AMPylation and UMPylation. The protein is Protein nucleotidyltransferase YdiU of Escherichia coli (strain K12 / MC4100 / BW2952).